Reading from the N-terminus, the 661-residue chain is 3-hydroxypropionyl-coenzyme A synthetase (661 aa).

Aspartate 526 is a catalytic residue. Lysine 617 is subject to N6-acetyllysine.

The protein belongs to the ATP-dependent AMP-binding enzyme family. As to quaternary structure, homotetramer.

The catalysed reaction is 3-hydroxypropanoate + ATP + CoA = 3-hydroxypropanoyl-CoA + AMP + diphosphate. Plays a role in the autotrophic CO(2) fixation pathway. Activates 3-hydroxypropionate to its CoA ester. Can also activate propionate, and to a lesser extent acrylate, acetate and butyrate. This is 3-hydroxypropionyl-coenzyme A synthetase from Metallosphaera sedula (strain ATCC 51363 / DSM 5348 / JCM 9185 / NBRC 15509 / TH2).